The chain runs to 117 residues: SPbeta prophage-derived uncharacterized protein YosL (117 aa).

This chain is SPbeta prophage-derived uncharacterized protein YosL (yosL), found in Bacillus subtilis (strain 168).